The sequence spans 124 residues: ATP synthase epsilon chain (124 aa).

Belongs to the ATPase epsilon chain family. As to quaternary structure, F-type ATPases have 2 components, CF(1) - the catalytic core - and CF(0) - the membrane proton channel. CF(1) has five subunits: alpha(3), beta(3), gamma(1), delta(1), epsilon(1). CF(0) has three main subunits: a, b and c.

It localises to the cell membrane. Its function is as follows. Produces ATP from ADP in the presence of a proton gradient across the membrane. This chain is ATP synthase epsilon chain, found in Streptomyces griseus subsp. griseus (strain JCM 4626 / CBS 651.72 / NBRC 13350 / KCC S-0626 / ISP 5235).